The chain runs to 915 residues: DNA (cytosine-5)-methyltransferase 3 (915 aa).

Low complexity predominate over residues 1 to 14 (MAPSSPSSARPTRA). Disordered stretches follow at residues 1–107 (MAPS…AEEQ) and 152–171 (HSNW…PEED). Residues 21–30 (AMAEEIHQNQ) are compositionally biased toward basic and acidic residues. A compositionally biased stretch (basic residues) spans 42 to 57 (AKRRRKAASSGKKPKP). Residues 71–80 (KKGETEKTEP) show a composition bias toward basic and acidic residues. Acidic residues predominate over residues 81 to 107 (VVDDVCAEEPDEEELAMGEEEAEAEEQ). The BAH domain occupies 188–313 (IVYCLGDDVY…VAYSTFANIS (126 aa)). Positions 315 to 328 (ENGQSGSETASGIS) are enriched in polar residues. Residues 315–338 (ENGQSGSETASGISSDDAGLETSS) form a disordered region. The 532-residue stretch at 345 to 876 (ATLLDLYSGC…YCLGQAYLGE (532 aa)) folds into the SAM-dependent MTase C5-type domain. Residues 445–508 (FVVQKLIGIR…EGRKRKILPL (64 aa)) form the Chromo domain. Cysteine 521 is a catalytic residue.

It belongs to the class I-like SAM-binding methyltransferase superfamily. C5-methyltransferase family.

Its subcellular location is the nucleus. The catalysed reaction is a 2'-deoxycytidine in DNA + S-adenosyl-L-methionine = a 5-methyl-2'-deoxycytidine in DNA + S-adenosyl-L-homocysteine + H(+). In terms of biological role, may be involved in the CpXpG methylation and in gene silencing. The protein is DNA (cytosine-5)-methyltransferase 3 (DMT105) of Zea mays (Maize).